A 157-amino-acid polypeptide reads, in one-letter code: Probable succinate transporter subunit YjjB (157 aa).

The next 4 membrane-spanning stretches (helical) occupy residues 8–28 (FALA…AMVF), 57–77 (LNIE…GIQW), 87–107 (VFTV…TAMI), and 129–149 (FLTA…PGLW).

It belongs to the ThrE exporter (TC 2.A.79) family. As to quaternary structure, the transporter is composed of YjjB and YjjP.

Its subcellular location is the cell inner membrane. Its function is as follows. Involved in succinate export with YjjP. Both proteins are required for export. This chain is Probable succinate transporter subunit YjjB, found in Shigella boydii serotype 4 (strain Sb227).